The chain runs to 228 residues: Lipoprotein-releasing system ATP-binding protein LolD (228 aa).

An ABC transporter domain is found at 6–228 (LRCKELSKSY…KNGILHKEQG (223 aa)). 42–49 (GASGSGKS) serves as a coordination point for ATP.

This sequence belongs to the ABC transporter superfamily. Lipoprotein translocase (TC 3.A.1.125) family. The complex is composed of two ATP-binding proteins (LolD) and two transmembrane proteins (LolC and LolE).

It localises to the cell inner membrane. Part of the ABC transporter complex LolCDE involved in the translocation of mature outer membrane-directed lipoproteins, from the inner membrane to the periplasmic chaperone, LolA. Responsible for the formation of the LolA-lipoprotein complex in an ATP-dependent manner. The chain is Lipoprotein-releasing system ATP-binding protein LolD from Idiomarina loihiensis (strain ATCC BAA-735 / DSM 15497 / L2-TR).